The chain runs to 727 residues: Iron-sulfur clusters transporter atm1, mitochondrial (727 aa).

The tract at residues 46 to 97 (NSPLRKDASKEPALASNSKTTNPIPTQASASVNPPKDARNATTAKKDLLSET) is disordered. A compositionally biased stretch (polar residues) spans 60 to 77 (ASNSKTTNPIPTQASASV). Positions 81–94 (KDARNATTAKKDLL) are enriched in basic and acidic residues. A helical transmembrane segment spans residues 131–152 (VGTALSLLVGAKILNVEVPFYF). The ABC transmembrane type-1 domain occupies 131–421 (VGTALSLLVG…LGSVYRELRQ (291 aa)). Over 153 to 175 (KSIVDSMNIDFATVGGTAYTVAG) the chain is Mitochondrial intermembrane. Residues 176–199 (SMIIAYGVTRIGATLFQELRNAVF) traverse the membrane as a helical segment. Residues 200–248 (ASVAQKAIRRVARNVFEHLLRLDLNFHLSRQTGGLTRAIDRGTKGISFL) are Mitochondrial matrix-facing. Residues 249–272 (LTSMVFHVVPTALEISLVCGILTY) traverse the membrane as a helical segment. A topological domain (mitochondrial intermembrane) is located at residue Gln-273. A helical membrane pass occupies residues 274 to 294 (YGFQFAAITAATMVAYTAFTI). The Mitochondrial matrix portion of the chain corresponds to 295-360 (TTTAWRTKFR…ASIKVTTSLA (66 aa)). Glutathione contacts are provided by residues 300 to 304 (RTKFR) and 363 to 366 (NSGQ). A helical transmembrane segment spans residues 361–379 (FLNSGQNMIFSSALAAMMY). Residues 380–394 (LAANGVANGNLTVGD) lie on the Mitochondrial intermembrane side of the membrane. Residues 395 to 416 (LVMVNQLVFQLSVPLNFLGSVY) form a helical membrane-spanning segment. Gly-413 lines the glutathione pocket. Residues 417–727 (RELRQSLLDM…DMAPGPKAQQ (311 aa)) lie on the Mitochondrial matrix side of the membrane. One can recognise an ABC transporter domain in the interval 456-692 (IRFENVTFGY…NGIYAELWNA (237 aa)). ATP is bound by residues Tyr-465 and 489–500 (GPSGCGKSTILR). Residues 702 to 719 (EFERETERDDVESKERDM) show a composition bias toward basic and acidic residues. Residues 702–727 (EFERETERDDVESKERDMAPGPKAQQ) form a disordered region.

It belongs to the ABC transporter superfamily. ABCB family. Heavy Metal importer (TC 3.A.1.210) subfamily. In terms of assembly, homodimer.

The protein resides in the mitochondrion inner membrane. In terms of biological role, performs an essential function in the generation of cytoplasmic iron-sulfur proteins by mediating the ATP-dependent export of Fe/S cluster precursors synthesized by nfs1 and other mitochondrial proteins. Hydrolyzes ATP. Binds glutathione and may function by transporting a glutathione-conjugated iron-sulfur compound. This chain is Iron-sulfur clusters transporter atm1, mitochondrial, found in Aspergillus fumigatus (strain ATCC MYA-4609 / CBS 101355 / FGSC A1100 / Af293) (Neosartorya fumigata).